A 194-amino-acid chain; its full sequence is Peptidyl-tRNA hydrolase (194 aa).

Tyr-16 is a binding site for tRNA. His-21 (proton acceptor) is an active-site residue. 3 residues coordinate tRNA: Phe-67, Asn-69, and Asn-115.

Belongs to the PTH family. In terms of assembly, monomer.

The protein resides in the cytoplasm. It catalyses the reaction an N-acyl-L-alpha-aminoacyl-tRNA + H2O = an N-acyl-L-amino acid + a tRNA + H(+). Its function is as follows. Hydrolyzes ribosome-free peptidyl-tRNAs (with 1 or more amino acids incorporated), which drop off the ribosome during protein synthesis, or as a result of ribosome stalling. Functionally, catalyzes the release of premature peptidyl moieties from peptidyl-tRNA molecules trapped in stalled 50S ribosomal subunits, and thus maintains levels of free tRNAs and 50S ribosomes. This Escherichia coli O17:K52:H18 (strain UMN026 / ExPEC) protein is Peptidyl-tRNA hydrolase.